A 141-amino-acid polypeptide reads, in one-letter code: MSSRTIMAFDFGTKSIGSAIGQEITGTASPLKAFKAQDGTPNWDDIEKQIKEWNPDLIVVGLPTDLHGKELDTITPRAKKFANRLHGRFGKQVELHDERLSTAEARADLFEFGGYKALSKGNIDCQSAVVILESWFENQWG.

Belongs to the YqgF nuclease family.

The protein resides in the cytoplasm. In terms of biological role, could be a nuclease involved in processing of the 5'-end of pre-16S rRNA. The sequence is that of Putative pre-16S rRNA nuclease from Aliivibrio fischeri (strain ATCC 700601 / ES114) (Vibrio fischeri).